A 251-amino-acid polypeptide reads, in one-letter code: Ribonuclease PH (251 aa).

Phosphate contacts are provided by residues R90 and G128–R130.

This sequence belongs to the RNase PH family. In terms of assembly, homohexameric ring arranged as a trimer of dimers.

The enzyme catalyses tRNA(n+1) + phosphate = tRNA(n) + a ribonucleoside 5'-diphosphate. In terms of biological role, phosphorolytic 3'-5' exoribonuclease that plays an important role in tRNA 3'-end maturation. Removes nucleotide residues following the 3'-CCA terminus of tRNAs; can also add nucleotides to the ends of RNA molecules by using nucleoside diphosphates as substrates, but this may not be physiologically important. Probably plays a role in initiation of 16S rRNA degradation (leading to ribosome degradation) during starvation. This is Ribonuclease PH from Leifsonia xyli subsp. xyli (strain CTCB07).